Reading from the N-terminus, the 398-residue chain is Serine/threonine-protein phosphatase 2A activator (398 aa).

ATP-binding residues include Arg-137, Thr-142, and Gly-143. The Mg(2+) site is built by Gly-197 and Asp-203. ATP contacts are provided by Pro-293, Gln-296, and His-297. Positions 343-352 (PVATAPPPPA) are enriched in pro residues. Residues 343 to 398 (PVATAPPPPAESLSIEQNVGDSSSESSDNSVVLRPSTSSSSLVAAAEGSGDKPSKE) are disordered. A compositionally biased stretch (low complexity) spans 363-388 (DSSSESSDNSVVLRPSTSSSSLVAAA).

The protein belongs to the PTPA-type PPIase family. Associates with PP2A heterodimeric core enzyme PP2A(D), composed of a catalytic subunit (subunit C) and a constant regulatory subunit (PR65 or subunit A). Interacts with the catalytic subunit Pp4-19C of the serine/threonine-protein phosphatase 4 (PP4) complex; thereby mediating basal localization of the Miranda (Mira) complex; probably by facilitating the dephosphorylation of Mira.

The protein localises to the cytoplasm. It localises to the nucleus. The enzyme catalyses [protein]-peptidylproline (omega=180) = [protein]-peptidylproline (omega=0). In terms of biological role, PPIases accelerate the folding of proteins. It catalyzes the cis-trans isomerization of proline imidic peptide bonds in oligopeptides. Acts as a regulatory subunit for serine/threonine-protein phosphatase 2A (PP2A). Modulates PP2A activity or substrate specificity, probably by inducing a conformational change in the catalytic subunit, a proposed direct target of the PPIase. Acts as mediator for the basal localization of the Miranda (Mira) complex during mitosis of larval neuroblast asymmetric division. Associates with the phosphatase 4 (PP4) complex to mediate basal localization of Mira; probably by facilitating the dephosphorylation of Mira. Cortical association of Mira mediated by the PTPA-PP4 complex seems to be independent of aPKC activity. In Drosophila melanogaster (Fruit fly), this protein is Serine/threonine-protein phosphatase 2A activator.